Consider the following 170-residue polypeptide: IMPACT family member YDL177C (170 aa).

The disordered stretch occupies residues 79 to 98; sequence KKKGNKANKSNNSHVNKSRN.

Belongs to the IMPACT family.

The polypeptide is IMPACT family member YDL177C (Saccharomyces cerevisiae (strain ATCC 204508 / S288c) (Baker's yeast)).